Here is a 346-residue protein sequence, read N- to C-terminus: MSGYTASVVGASGFTGGEVLRLLSGHPEMAVTQATSRSYENKTVGSIHPNLRGMDLRFSSPEELESVDVLFACTPHGVSMEHIDAFQDAADTVVDLSADFRLDIESQYDEWYDGHNRPELLDKAEYALPELNRENLPGADIVASGGCNATAAIMGLKPLFDGDILGGGEQIVVDVKVGSSEGGAGGGEASSHPERSGVVRPYAPTGHRHEAEIEQFLGTGVSFTAHAVDMTRGASATCHVYPEEPVSKGDLWSAFRESYEDEPFVRLVAGGSGVYRYPEPKAVAGSNYAEVGFELDPTNKRVVVFSAIDNMMKGSAGQAVHAANIALGIEETAGLEFAGLHPVGAP.

Position 12–15 (12–15 (SGFT)) interacts with NADP(+). Residue Cys-147 is part of the active site. Residue Asn-310 participates in NADP(+) binding.

Belongs to the NAGSA dehydrogenase family. Type 1 subfamily. LysY sub-subfamily.

It is found in the cytoplasm. The catalysed reaction is [amino-group carrier protein]-C-terminal-N-(1-carboxy-5-oxopentan-1-yl)-L-glutamine + phosphate + NADP(+) = [amino-group carrier protein]-C-terminal-N-(1-carboxy-5-phosphooxy-5-oxopentan-1-yl)-L-glutamine + NADPH + H(+). It carries out the reaction [amino-group carrier protein]-C-terminal-gamma-(L-glutamyl-5-semialdehyde)-L-glutamate + phosphate + NADP(+) = [amino-group carrier protein]-C-terminal-gamma-(5-phospho-L-glutamyl)-L-glutamate + NADPH + H(+). It participates in amino-acid biosynthesis; L-lysine biosynthesis via AAA pathway; L-lysine from L-alpha-aminoadipate (Thermus route): step 3/5. It functions in the pathway amino-acid biosynthesis; L-arginine biosynthesis. In terms of biological role, involved in both the arginine and lysine biosynthetic pathways. This chain is Putative [LysW]-L-2-aminoadipate/[LysW]-L-glutamate phosphate reductase, found in Natronomonas pharaonis (strain ATCC 35678 / DSM 2160 / CIP 103997 / JCM 8858 / NBRC 14720 / NCIMB 2260 / Gabara) (Halobacterium pharaonis).